The following is a 30-amino-acid chain: Cyclotide psyleio E (30 aa).

A cross-link (cyclopeptide (Ser-Lys)) is located at residues 1-30 (SVTPIVCGETCFGGTCNTPGCSCSWPICTK). 3 cysteine pairs are disulfide-bonded: cysteine 7–cysteine 21, cysteine 11–cysteine 23, and cysteine 16–cysteine 28.

Post-translationally, this is a cyclic peptide.

Functionally, probably participates in a plant defense mechanism. The sequence is that of Cyclotide psyleio E from Psychotria leiocarpa.